We begin with the raw amino-acid sequence, 270 residues long: 3-methyl-2-oxobutanoate hydroxymethyltransferase (270 aa).

Asp-50 and Asp-89 together coordinate Mg(2+). 3-methyl-2-oxobutanoate-binding positions include 50-51, Asp-89, and Lys-118; that span reads DS. Position 120 (Glu-120) interacts with Mg(2+). Glu-187 acts as the Proton acceptor in catalysis.

This sequence belongs to the PanB family. In terms of assembly, homodecamer; pentamer of dimers. It depends on Mg(2+) as a cofactor.

It localises to the cytoplasm. The catalysed reaction is 3-methyl-2-oxobutanoate + (6R)-5,10-methylene-5,6,7,8-tetrahydrofolate + H2O = 2-dehydropantoate + (6S)-5,6,7,8-tetrahydrofolate. It participates in cofactor biosynthesis; (R)-pantothenate biosynthesis; (R)-pantoate from 3-methyl-2-oxobutanoate: step 1/2. Catalyzes the reversible reaction in which hydroxymethyl group from 5,10-methylenetetrahydrofolate is transferred onto alpha-ketoisovalerate to form ketopantoate. This is 3-methyl-2-oxobutanoate hydroxymethyltransferase from Helicobacter pylori (strain HPAG1).